The primary structure comprises 885 residues: Protein arg11, mitochondrial (885 aa).

A mitochondrion-targeting transit peptide spans 1–59 (MLIELQQIVKSGLVRNGAKHCTKRSLLCSNASVIASKRFQGSFAPGQQQPLNPLAKPIE). An N-acetyltransferase domain is found at 346–499 (FVINKHDSLD…SDKPFADAII (154 aa)). Positions 503–523 (STKPPTASSTTNNPSSSQINQ) are enriched in low complexity. The segment at 503–532 (STKPPTASSTTNNPSSSQINQKRSYSTSSL) is disordered. The active site involves Cys703.

This sequence in the N-terminal section; belongs to the acetylglutamate kinase family. The protein in the C-terminal section; belongs to the NAGSA dehydrogenase family. In terms of processing, the protein precursor is probably cleaved into the two biologically active enzymes, the kinase and the reductase.

The protein localises to the mitochondrion. The catalysed reaction is N-acetyl-L-glutamate 5-semialdehyde + phosphate + NADP(+) = N-acetyl-L-glutamyl 5-phosphate + NADPH + H(+). The enzyme catalyses N-acetyl-L-glutamate + ATP = N-acetyl-L-glutamyl 5-phosphate + ADP. It participates in amino-acid biosynthesis; L-arginine biosynthesis; N(2)-acetyl-L-ornithine from L-glutamate: step 2/4. The protein operates within amino-acid biosynthesis; L-arginine biosynthesis; N(2)-acetyl-L-ornithine from L-glutamate: step 3/4. With respect to regulation, the kinase activity is inhibited by arginine. This chain is Protein arg11, mitochondrial (arg11), found in Schizosaccharomyces pombe (strain 972 / ATCC 24843) (Fission yeast).